Consider the following 201-residue polypeptide: 3-isopropylmalate dehydratase small subunit (201 aa).

It belongs to the LeuD family. LeuD type 1 subfamily. In terms of assembly, heterodimer of LeuC and LeuD.

It carries out the reaction (2R,3S)-3-isopropylmalate = (2S)-2-isopropylmalate. It functions in the pathway amino-acid biosynthesis; L-leucine biosynthesis; L-leucine from 3-methyl-2-oxobutanoate: step 2/4. Functionally, catalyzes the isomerization between 2-isopropylmalate and 3-isopropylmalate, via the formation of 2-isopropylmaleate. The sequence is that of 3-isopropylmalate dehydratase small subunit from Shewanella woodyi (strain ATCC 51908 / MS32).